The chain runs to 432 residues: Trigger factor (432 aa).

In terms of domain architecture, PPIase FKBP-type spans 161–246; sequence EDRVTIDFTG…LKKVEERELP (86 aa).

Belongs to the FKBP-type PPIase family. Tig subfamily. As to quaternary structure, homodimer and monomer. In vivo most of the ribosomes are in complex with monomeric TF. Uncomplexed TF, however, is in a monomer-dimer equilibrium with approximately two thirds of TF existing in a dimeric state.

Its subcellular location is the cytoplasm. It carries out the reaction [protein]-peptidylproline (omega=180) = [protein]-peptidylproline (omega=0). Functionally, involved in protein export. Acts as a chaperone by maintaining the newly synthesized protein in an open conformation. Functions as a peptidyl-prolyl cis-trans isomerase. The chain is Trigger factor from Shigella boydii serotype 4 (strain Sb227).